Reading from the N-terminus, the 437-residue chain is F-box protein At3g62430 (437 aa).

The F-box domain occupies 1–49 (MDRISNLPDGVIYRVISLLSTKEATCLKYTSKNWLNLVTIIPIAVFVDS).

The polypeptide is F-box protein At3g62430 (Arabidopsis thaliana (Mouse-ear cress)).